The following is a 72-amino-acid chain: DNA-directed RNA polymerase subunit epsilon (72 aa).

It belongs to the RNA polymerase subunit epsilon family. RNAP is composed of a core of 2 alpha, a beta and a beta' subunit. The core is associated with a delta subunit, and at least one of epsilon or omega. When a sigma factor is associated with the core the holoenzyme is formed, which can initiate transcription.

It catalyses the reaction RNA(n) + a ribonucleoside 5'-triphosphate = RNA(n+1) + diphosphate. Functionally, a non-essential component of RNA polymerase (RNAP). The sequence is that of DNA-directed RNA polymerase subunit epsilon from Staphylococcus aureus (strain JH1).